The following is a 143-amino-acid chain: Ribosome-binding factor A (143 aa).

Positions 123–143 (DKSLQENYKQNDKETKAEKLR) are disordered.

The protein belongs to the RbfA family. Monomer. Binds 30S ribosomal subunits, but not 50S ribosomal subunits or 70S ribosomes.

The protein resides in the cytoplasm. One of several proteins that assist in the late maturation steps of the functional core of the 30S ribosomal subunit. Associates with free 30S ribosomal subunits (but not with 30S subunits that are part of 70S ribosomes or polysomes). Required for efficient processing of 16S rRNA. May interact with the 5'-terminal helix region of 16S rRNA. The sequence is that of Ribosome-binding factor A from Francisella tularensis subsp. novicida (strain U112).